The chain runs to 467 residues: Nuclear distribution protein PAC1 (467 aa).

Positions 62 to 96 form a coiled coil; it reads GSIIRLQRAITKLEQKCDALQQELDDKTKQLETIV. WD repeat units follow at residues 121 to 160, 164 to 212, 219 to 262, 264 to 302, 325 to 365, 385 to 424, and 426 to 466; these read QNES…IPLA, AHSK…GELK, AHDS…QSFS, HSEW…SVGT, PYRD…LKPN, GHTS…KTWS, and IHNN…VKII.

The protein belongs to the WD repeat LIS1/nudF family. As to quaternary structure, self-associates. Interacts with NDL1 and dynein.

It localises to the cytoplasm. Its subcellular location is the cytoskeleton. The protein resides in the spindle pole. In terms of biological role, positively regulates the activity of the minus-end directed microtubule motor protein dynein. Plays a central role in positioning the mitotic spindle at the bud neck during cell division. Targets cytoplasmic dynein to microtubule plus ends, thereby promoting dynein-mediated microtubule sliding along the bud cortex and consequently the movement of the mitotic spindle to the bud neck. The sequence is that of Nuclear distribution protein PAC1 from Candida glabrata (strain ATCC 2001 / BCRC 20586 / JCM 3761 / NBRC 0622 / NRRL Y-65 / CBS 138) (Yeast).